Reading from the N-terminus, the 504-residue chain is Protein FMP42 (504 aa).

The Vacuolar portion of the chain corresponds to 1 to 11 (MTSTRTLRYAQ). A helical transmembrane segment spans residues 12-32 (VACACIWCLFSAGIIFGFAAL). At 33–64 (KPILISEGVYHELCDPKDGDRLLCTAQDLKLN) the chain is on the cytoplasmic side. Residues 65–85 (FIFALSATVTNIMALPVGKIL) traverse the membrane as a helical segment. At 86–91 (DMYGPR) the chain is on the vacuolar side. The helical transmembrane segment at 92–112 (VCGIIGSCLLFLASGNFISAK) threads the bilayer. Residues 113-119 (HLVSLWD) are Cytoplasmic-facing. The chain crosses the membrane as a helical span at residues 120–140 (PYLVGYTLLAVAGPFVFISCF). Topologically, residues 141 to 150 (QLANSFPQRS) are vacuolar. The helical transmembrane segment at 151-171 (GTVLALLTGSFDSSSALFLLY) threads the bilayer. The Cytoplasmic segment spans residues 172–186 (RLLYQNWFPTLNVSR). Residues 187–207 (FFTLYLIVPVFILACQLTIMP) form a helical membrane-spanning segment. Over 208–302 (HSSYKTVNHI…KSAYEQIKSP (95 aa)) the chain is Vacuolar. A phosphoserine mark is found at Ser-238, Ser-249, and Ser-269. The helical transmembrane segment at 303–323 (WFYLMLLFALVAMLRINYFIA) threads the bilayer. At 324 to 344 (TVRTQEEYLLNDPDLALKLNS) the chain is on the cytoplasmic side. A helical transmembrane segment spans residues 345–365 (IFDMLLPLGGAVSIPFIGLLL). The Vacuolar segment spans residues 366–385 (DHTDTLSTLTILFTTSTAIG). The chain crosses the membrane as a helical span at residues 386 to 406 (VFGLIPNSFTWNLIGIVLLVV). At 407-421 (YRPFYYTVVSDYSSK) the chain is on the cytoplasmic side. Residues 422–442 (VFGFDTFGTVYGLLSCICGIF) form a helical membrane-spanning segment. Over 443 to 462 (NMSQNLLDKWTHTTFNMNPF) the chain is Vacuolar. The chain crosses the membrane as a helical span at residues 463 to 483 (PINLTLVILTVVFSLTLTFYI). The Cytoplasmic segment spans residues 484–504 (RSQILPKPVNERGLSSNYQTI).

Belongs to the SLC43A transporter (TC 2.A.1.44) family.

It is found in the vacuole membrane. The protein is Protein FMP42 (FMP42) of Saccharomyces cerevisiae (strain ATCC 204508 / S288c) (Baker's yeast).